The chain runs to 451 residues: Interferon regulatory factor 4 (451 aa).

Residues Asn-21–Pro-129 constitute a DNA-binding region (IRF tryptophan pentad repeat). A phosphoserine; by ROCK2 mark is found at Ser-447 and Ser-448.

This sequence belongs to the IRF family. Interacts with the BATF-JUNB heterodimer. Interacts with BATF (via bZIP domain); the interaction is direct. Interacts with SPIB. Interacts with DEF6. Directly interacts with NLRP3 in the nucleus of Th2 cells; this interaction enhances IRF4 ability to bind to the IL4 promoter and is required for optimal IRF4-dependent IL4 transcription. Interacts with SPI1. Post-translationally, phosphorylation by ROCK2 regulates IL-17 and IL-21 production. In terms of tissue distribution, lymphoid cells.

The protein resides in the nucleus. It localises to the cytoplasm. Its function is as follows. Transcriptional activator. Binds to the interferon-stimulated response element (ISRE) of the MHC class I promoter. Binds the immunoglobulin lambda light chain enhancer, together with PU.1. Probably plays a role in ISRE-targeted signal transduction mechanisms specific to lymphoid cells. Involved in CD8(+) dendritic cell differentiation by forming a complex with the BATF-JUNB heterodimer in immune cells, leading to recognition of AICE sequence (5'-TGAnTCA/GAAA-3'), an immune-specific regulatory element, followed by cooperative binding of BATF and IRF4 and activation of genes. In Homo sapiens (Human), this protein is Interferon regulatory factor 4.